A 166-amino-acid chain; its full sequence is Interferon gamma (166 aa).

The first 23 residues, Met-1–Gly-23, serve as a signal peptide directing secretion. The residue at position 24 (Gln-24) is a Pyrrolidone carboxylic acid. Residues Asn-39 and Asn-106 are each glycosylated (N-linked (GlcNAc...) asparagine).

It belongs to the type II (or gamma) interferon family. As to quaternary structure, homodimer. Interacts with IFNGR1 (via extracellular domain); this interaction promotes IFNGR1 dimerization. As to expression, released primarily from activated T lymphocytes.

The protein localises to the secreted. In terms of biological role, type II interferon produced by immune cells such as T-cells and NK cells that plays crucial roles in antimicrobial, antiviral, and antitumor responses by activating effector immune cells and enhancing antigen presentation. Primarily signals through the JAK-STAT pathway after interaction with its receptor IFNGR1 to affect gene regulation. Upon IFNG binding, IFNGR1 intracellular domain opens out to allow association of downstream signaling components JAK2, JAK1 and STAT1, leading to STAT1 activation, nuclear translocation and transcription of IFNG-regulated genes. Many of the induced genes are transcription factors such as IRF1 that are able to further drive regulation of a next wave of transcription. Plays a role in class I antigen presentation pathway by inducing a replacement of catalytic proteasome subunits with immunoproteasome subunits. In turn, increases the quantity, quality, and repertoire of peptides for class I MHC loading. Increases the efficiency of peptide generation also by inducing the expression of activator PA28 that associates with the proteasome and alters its proteolytic cleavage preference. Up-regulates as well MHC II complexes on the cell surface by promoting expression of several key molecules such as cathepsins B/CTSB, H/CTSH, and L/CTSL. Participates in the regulation of hematopoietic stem cells during development and under homeostatic conditions by affecting their development, quiescence, and differentiation. This chain is Interferon gamma (IFNG), found in Bos taurus (Bovine).